Consider the following 79-residue polypeptide: Translational regulator CsrA (79 aa).

Belongs to the CsrA/RsmA family. As to quaternary structure, homodimer; the beta-strands of each monomer intercalate to form a hydrophobic core, while the alpha-helices form wings that extend away from the core.

The protein localises to the cytoplasm. In terms of biological role, a translational regulator that binds mRNA to regulate translation initiation and/or mRNA stability. Usually binds in the 5'-UTR at or near the Shine-Dalgarno sequence preventing ribosome-binding, thus repressing translation. Its main target seems to be the major flagellin gene, while its function is anatagonized by FliW. This Solidesulfovibrio magneticus (strain ATCC 700980 / DSM 13731 / RS-1) (Desulfovibrio magneticus) protein is Translational regulator CsrA.